Reading from the N-terminus, the 258-residue chain is Aspartate/glutamate leucyltransferase (258 aa).

This sequence belongs to the R-transferase family. Bpt subfamily.

The protein resides in the cytoplasm. The catalysed reaction is N-terminal L-glutamyl-[protein] + L-leucyl-tRNA(Leu) = N-terminal L-leucyl-L-glutamyl-[protein] + tRNA(Leu) + H(+). The enzyme catalyses N-terminal L-aspartyl-[protein] + L-leucyl-tRNA(Leu) = N-terminal L-leucyl-L-aspartyl-[protein] + tRNA(Leu) + H(+). Functions in the N-end rule pathway of protein degradation where it conjugates Leu from its aminoacyl-tRNA to the N-termini of proteins containing an N-terminal aspartate or glutamate. The protein is Aspartate/glutamate leucyltransferase of Bradyrhizobium sp. (strain ORS 278).